We begin with the raw amino-acid sequence, 578 residues long: Maltogenic alpha-amylase (578 aa).

Belongs to the glycosyl hydrolase 13 family.

The catalysed reaction is hydrolysis of (1-&gt;4)-alpha-D-glucosidic linkages in polysaccharides so as to remove successive alpha-maltose residues from the non-reducing ends of the chains.. Converts starch into maltose. In contrary to other maltogenic alpha-amylases BlmA cannot hydrolyze 1,4-alpha-glucosidic linkage next to 1,6-alpha-glucosidic linkages. This chain is Maltogenic alpha-amylase (blmA), found in Bacillus licheniformis.